Here is a 202-residue protein sequence, read N- to C-terminus: Large ribosomal subunit protein uL5 (202 aa).

Residues 1–17 (MSAKAATKNATKVAVKA) show a composition bias toward low complexity. The segment at 1-30 (MSAKAATKNATKVAVKAPEATTPVETKKSK) is disordered.

It belongs to the universal ribosomal protein uL5 family. In terms of assembly, component of the large ribosomal subunit.

It is found in the nucleus. The protein resides in the cytoplasm. Its function is as follows. Component of the ribosome, a large ribonucleoprotein complex responsible for the synthesis of proteins in the cell. The small ribosomal subunit (SSU) binds messenger RNAs (mRNAs) and translates the encoded message by selecting cognate aminoacyl-transfer RNA (tRNA) molecules. The large subunit (LSU) contains the ribosomal catalytic site termed the peptidyl transferase center (PTC), which catalyzes the formation of peptide bonds, thereby polymerizing the amino acids delivered by tRNAs into a polypeptide chain. The nascent polypeptides leave the ribosome through a tunnel in the LSU and interact with protein factors that function in enzymatic processing, targeting, and the membrane insertion of nascent chains at the exit of the ribosomal tunnel. This Dictyostelium discoideum (Social amoeba) protein is Large ribosomal subunit protein uL5 (rpl11).